We begin with the raw amino-acid sequence, 394 residues long: MPDVYGPGASQNDPIPAHAPRQQVLPEEYQRASDDELHRRIREAKDTLGDKVVILGHFYQRDEVIQHADFVGDSFQLARAAKTRPEAEAIVFCGVHFMAETADLLSTDEQSVILPNLAAGCSMADMADLDSVEDCWEQLTSIYGDDTLIPVTYMNSSAALKGFVGEHGGIVCTSSNARSVLEWAFERGQRVLFFPDQHLGRNTAKAMGIGIDQMPLWNPNKPLGGNTVSELENAKVLLWHGFCSVHKRFTVEQINKARAEYPDVHVIVHPESPMPVVDAADSSGSTDFIVKAIQAAPAGSTFAIGTEINLVQRLAAQYPQHTIFCLDPVICPCSTMYRIHPGYLAWALEELVAGNVINQISVSESVAAPARVALERMLSVVPAAPVTPSSSKDA.

Iminosuccinate-binding residues include His57 and Ser74. Cys121 serves as a coordination point for [4Fe-4S] cluster. Iminosuccinate-binding positions include 153 to 155 (YMN) and Ser174. [4Fe-4S] cluster is bound at residue Cys243. Iminosuccinate contacts are provided by residues 269 to 271 (HPE) and Thr286. [4Fe-4S] cluster is bound at residue Cys333.

This sequence belongs to the quinolinate synthase family. Type 3 subfamily. Requires [4Fe-4S] cluster as cofactor.

It is found in the cytoplasm. The enzyme catalyses iminosuccinate + dihydroxyacetone phosphate = quinolinate + phosphate + 2 H2O + H(+). It functions in the pathway cofactor biosynthesis; NAD(+) biosynthesis; quinolinate from iminoaspartate: step 1/1. Its function is as follows. Catalyzes the condensation of iminoaspartate with dihydroxyacetone phosphate to form quinolinate. The sequence is that of Quinolinate synthase from Corynebacterium glutamicum (strain ATCC 13032 / DSM 20300 / JCM 1318 / BCRC 11384 / CCUG 27702 / LMG 3730 / NBRC 12168 / NCIMB 10025 / NRRL B-2784 / 534).